The primary structure comprises 216 residues: Germin-like protein 1-1 (216 aa).

The signal sequence occupies residues 1–24 (MARVQLWVAAACAVVLALAAPSLA). A disulfide bridge connects residues cysteine 34 and cysteine 49. N-linked (GlcNAc...) asparagine glycosylation is found at asparagine 52 and asparagine 76. Positions 61–209 (AGLKNPGNTN…AFRVDVPQVD (149 aa)) constitute a Cupin type-1 domain. 4 residues coordinate Mn(2+): histidine 109, histidine 111, glutamate 116, and histidine 155.

Belongs to the germin family. In terms of assembly, oligomer (believed to be a pentamer but probably hexamer).

Its subcellular location is the secreted. It localises to the extracellular space. The protein resides in the apoplast. In terms of biological role, may play a role in plant defense. Probably has no oxalate oxidase activity even if the active site is conserved. The protein is Germin-like protein 1-1 (GER4) of Oryza sativa subsp. japonica (Rice).